The chain runs to 250 residues: MKICLIDETGAGDGALSVLAARWGLEQDEDNLMALVLTTEHLELRKRDEPKLGGIFVDFVGGAMAHRRKFGGGRGEAVAKAVGIKGDYLPDVVDATAGLGRDAFVLASVGCRVRMLERNPVVAALLDDGLARGYADAEIGGWLQERLQLIHASSLTALTDITPRPQVVYLDPMFPHKQKSALVKKEMRVFQSLVGPDLDADGLLAPARQLATKRVVVKRPDYAPPLAEVATPNAVVTKGHRFDIYAGTPE.

Residues 101–102 (RD), 117–118 (ER), 153–154 (SS), and Asp171 each bind S-adenosyl-L-methionine.

It belongs to the methyltransferase superfamily. RsmJ family.

The protein localises to the cytoplasm. The enzyme catalyses guanosine(1516) in 16S rRNA + S-adenosyl-L-methionine = N(2)-methylguanosine(1516) in 16S rRNA + S-adenosyl-L-homocysteine + H(+). Functionally, specifically methylates the guanosine in position 1516 of 16S rRNA. The chain is Ribosomal RNA small subunit methyltransferase J from Klebsiella pneumoniae (strain 342).